The sequence spans 199 residues: MAKVLVLYYSAYGHIEAMANAVAEGAREAGATVDIKRVPELVPPDVAKASHYKLDQAAPVATIGDLADYDAIVVGTGTRFGRMASQMANFLDQAGGLWAKGALHGKVGGAFTSTATQHGGQETTLFSIITNLLHFGMVVVGLNYGFAGQMKLDEVTGGAPYGATTITGGDGSRQPSANELAGARYQGKTIAETAIKLHG.

One can recognise a Flavodoxin-like domain in the interval 4 to 190; it reads VLVLYYSAYG…AGARYQGKTI (187 aa). FMN contacts are provided by residues 10–15 and 78–80; these read SAYGHI and TRF. An NAD(+)-binding site is contributed by tyrosine 12. Residue tryptophan 98 participates in substrate binding. FMN-binding positions include 113-119 and histidine 134; that span reads STATQHG.

It belongs to the WrbA family. FMN is required as a cofactor.

It catalyses the reaction a quinone + NADH + H(+) = a quinol + NAD(+). The enzyme catalyses a quinone + NADPH + H(+) = a quinol + NADP(+). The sequence is that of NAD(P)H dehydrogenase (quinone) from Rhodopseudomonas palustris (strain BisB5).